The primary structure comprises 96 residues: UPF0358 protein Aflv_1873 (96 aa).

This sequence belongs to the UPF0358 family.

This is UPF0358 protein Aflv_1873 from Anoxybacillus flavithermus (strain DSM 21510 / WK1).